Here is a 188-residue protein sequence, read N- to C-terminus: Probable nicotinate-nucleotide adenylyltransferase (188 aa).

This sequence belongs to the NadD family.

The catalysed reaction is nicotinate beta-D-ribonucleotide + ATP + H(+) = deamido-NAD(+) + diphosphate. It functions in the pathway cofactor biosynthesis; NAD(+) biosynthesis; deamido-NAD(+) from nicotinate D-ribonucleotide: step 1/1. In terms of biological role, catalyzes the reversible adenylation of nicotinate mononucleotide (NaMN) to nicotinic acid adenine dinucleotide (NaAD). The protein is Probable nicotinate-nucleotide adenylyltransferase of Salinispora tropica (strain ATCC BAA-916 / DSM 44818 / JCM 13857 / NBRC 105044 / CNB-440).